The sequence spans 196 residues: Imidazoleglycerol-phosphate dehydratase (196 aa).

The protein belongs to the imidazoleglycerol-phosphate dehydratase family.

It is found in the cytoplasm. It carries out the reaction D-erythro-1-(imidazol-4-yl)glycerol 3-phosphate = 3-(imidazol-4-yl)-2-oxopropyl phosphate + H2O. It participates in amino-acid biosynthesis; L-histidine biosynthesis; L-histidine from 5-phospho-alpha-D-ribose 1-diphosphate: step 6/9. This Caulobacter sp. (strain K31) protein is Imidazoleglycerol-phosphate dehydratase.